The sequence spans 397 residues: Serine/threonine-protein kinase 17A (397 aa).

The segment at methionine 1 to glycine 23 is disordered. Serine 9 is modified (phosphoserine). Residues leucine 44–leucine 304 form the Protein kinase domain. ATP contacts are provided by residues leucine 50 to valine 58 and lysine 73. The Proton acceptor role is filled by aspartate 169.

It belongs to the protein kinase superfamily. CAMK Ser/Thr protein kinase family. DAP kinase subfamily. Autophosphorylated. As to expression, highly expressed in bone marrow. Lower levels in brain, heart, lung, liver and kidney.

The protein resides in the nucleus. The enzyme catalyses L-seryl-[protein] + ATP = O-phospho-L-seryl-[protein] + ADP + H(+). It catalyses the reaction L-threonyl-[protein] + ATP = O-phospho-L-threonyl-[protein] + ADP + H(+). With respect to regulation, inhibited by thiazolidinedione-type compounds: inhibited by furan- and pyridone- thiazolidinediones. Acts as a positive regulator of apoptosis. May also act as a regulator of cellular reactive oxygen species. The protein is Serine/threonine-protein kinase 17A (STK17A) of Oryctolagus cuniculus (Rabbit).